The sequence spans 133 residues: ATP synthase epsilon chain (133 aa).

The protein belongs to the ATPase epsilon chain family. F-type ATPases have 2 components, CF(1) - the catalytic core - and CF(0) - the membrane proton channel. CF(1) has five subunits: alpha(3), beta(3), gamma(1), delta(1), epsilon(1). CF(0) has three main subunits: a, b and c.

The protein resides in the cell membrane. Functionally, produces ATP from ADP in the presence of a proton gradient across the membrane. The polypeptide is ATP synthase epsilon chain (Staphylococcus haemolyticus (strain JCSC1435)).